The primary structure comprises 186 residues: ATP synthase subunit delta, chloroplastic (186 aa).

The protein belongs to the ATPase delta chain family. F-type ATPases have 2 components, F(1) - the catalytic core - and F(0) - the membrane proton channel. F(1) has five subunits: alpha(3), beta(3), gamma(1), delta(1), epsilon(1). CF(0) has four main subunits: a(1), b(1), b'(1) and c(10-14). The alpha and beta chains form an alternating ring which encloses part of the gamma chain. F(1) is attached to F(0) by a central stalk formed by the gamma and epsilon chains, while a peripheral stalk is formed by the delta, b and b' chains.

The protein localises to the plastid. It localises to the chloroplast thylakoid membrane. F(1)F(0) ATP synthase produces ATP from ADP in the presence of a proton or sodium gradient. F-type ATPases consist of two structural domains, F(1) containing the extramembraneous catalytic core and F(0) containing the membrane proton channel, linked together by a central stalk and a peripheral stalk. During catalysis, ATP synthesis in the catalytic domain of F(1) is coupled via a rotary mechanism of the central stalk subunits to proton translocation. Functionally, this protein is part of the stalk that links CF(0) to CF(1). It either transmits conformational changes from CF(0) to CF(1) or is implicated in proton conduction. This Porphyra purpurea (Red seaweed) protein is ATP synthase subunit delta, chloroplastic.